A 33-amino-acid chain; its full sequence is Potassium channel toxin alpha-KTx 10.5 (33 aa).

3 disulfide bridges follow: Cys4–Cys23, Cys9–Cys28, and Cys13–Cys30.

Expressed by the venom gland.

It is found in the secreted. Inhibits less than 5% of human voltage-gated potassium (Kv) channel Kv1.3/KCNA3 currents at 100nM concentration and does not block human Kv1.1/KCNA1 and Kv1.2/KCNA2 currents. The chain is Potassium channel toxin alpha-KTx 10.5 from Centruroides bonito (Scorpion).